The primary structure comprises 231 residues: uncharacterized protein (231 aa).

The N-terminal stretch at 1 to 17 is a signal peptide; sequence MFGKILTTSLLIAMTFA. Positions 197 to 231 are disordered; that stretch reads KARKQQKNEGDDEETEDEQKIGSAIDGWVERQAKL.

This is an uncharacterized protein from Caenorhabditis elegans.